The following is a 296-amino-acid chain: Urease accessory protein UreD (296 aa).

This sequence belongs to the UreD family. In terms of assembly, ureD, UreF and UreG form a complex that acts as a GTP-hydrolysis-dependent molecular chaperone, activating the urease apoprotein by helping to assemble the nickel containing metallocenter of UreC. The UreE protein probably delivers the nickel.

It localises to the cytoplasm. Functionally, required for maturation of urease via the functional incorporation of the urease nickel metallocenter. The protein is Urease accessory protein UreD of Synechococcus sp. (strain CC9311).